A 225-amino-acid chain; its full sequence is 3-dehydroquinate dehydratase (225 aa).

Residues Ser-6, 30–32 (EWR), and Arg-62 each bind 3-dehydroquinate. The active-site Proton donor/acceptor is the His-118. Residue Lys-143 is the Schiff-base intermediate with substrate of the active site. 3-dehydroquinate is bound by residues Arg-186, Ser-205, and Gln-209.

It belongs to the type-I 3-dehydroquinase family. Homodimer.

The catalysed reaction is 3-dehydroquinate = 3-dehydroshikimate + H2O. It participates in metabolic intermediate biosynthesis; chorismate biosynthesis; chorismate from D-erythrose 4-phosphate and phosphoenolpyruvate: step 3/7. Functionally, involved in the third step of the chorismate pathway, which leads to the biosynthesis of aromatic amino acids. Catalyzes the cis-dehydration of 3-dehydroquinate (DHQ) and introduces the first double bond of the aromatic ring to yield 3-dehydroshikimate. The protein is 3-dehydroquinate dehydratase of Streptococcus pneumoniae (strain Taiwan19F-14).